A 208-amino-acid chain; its full sequence is Glutathione S-transferase GstB (208 aa).

The 83-residue stretch at 1–83 (MITLWGRNNS…YLAAQYGQKR (83 aa)) folds into the GST N-terminal domain. Residues Asn12, Asn39, Val53, and 67-68 (ES) each bind glutathione. The region spanning 88–208 (SPARRAEAEK…VRKVVMIPVS (121 aa)) is the GST C-terminal domain.

It belongs to the GST superfamily.

It catalyses the reaction RX + glutathione = an S-substituted glutathione + a halide anion + H(+). Functionally, conjugation of reduced glutathione to a wide number of exogenous and endogenous hydrophobic electrophiles. The chain is Glutathione S-transferase GstB (gstB) from Escherichia coli O6:H1 (strain CFT073 / ATCC 700928 / UPEC).